Here is a 137-residue protein sequence, read N- to C-terminus: MPTINQLVRKPRKSNATKSKSPALNFGYNSMKKKATNNVAPQKRGVATRVGTMTPKKPNSALRKYARVRLSNLYEVTAYIPGIGHNLQEHSVVLIRGGRVKDLPGVRYHIIRGALDTAGVDGRMTSRSKYGTKAPKK.

The segment at 1-23 (MPTINQLVRKPRKSNATKSKSPA) is disordered. Position 102 is a 3-methylthioaspartic acid (aspartate 102).

It belongs to the universal ribosomal protein uS12 family. As to quaternary structure, part of the 30S ribosomal subunit. Contacts proteins S8 and S17. May interact with IF1 in the 30S initiation complex.

Its function is as follows. With S4 and S5 plays an important role in translational accuracy. Interacts with and stabilizes bases of the 16S rRNA that are involved in tRNA selection in the A site and with the mRNA backbone. Located at the interface of the 30S and 50S subunits, it traverses the body of the 30S subunit contacting proteins on the other side and probably holding the rRNA structure together. The combined cluster of proteins S8, S12 and S17 appears to hold together the shoulder and platform of the 30S subunit. The sequence is that of Small ribosomal subunit protein uS12 from Leuconostoc citreum (strain KM20).